Here is a 667-residue protein sequence, read N- to C-terminus: Acyl-coenzyme A oxidase acox-3 (667 aa).

Residues 138-141, 146-147, G178, R313, 334-337, and G410 each bind FAD; these read FCLT, GS, and QQYR. E433 acts as the Proton acceptor in catalysis. Residue E435 coordinates FAD. Positions 665–667 match the Microbody targeting signal motif; the sequence is SKL.

This sequence belongs to the acyl-CoA oxidase family. In terms of assembly, homodimer. The cofactor is FAD. Expressed in intestine.

The protein resides in the peroxisome. It carries out the reaction IC-asc-C7-CoA + O2 = IC-asc-DeltaC7-CoA + H2O2. The enzyme catalyses IC-asc-C9-CoA + O2 = IC-asc-DeltaC9-CoA + H2O2. The catalysed reaction is asc-C13-CoA + O2 = asc-DeltaC13-CoA + H2O2. The protein operates within lipid metabolism; peroxisomal fatty acid beta-oxidation. With respect to regulation, in contrast to other acyl-coenzyme A oxidases which bind to and are activated by ATP, does not bind ATP. Involved in the first step of peroxisomal beta-oxidation by catalyzing the desaturation of fatty acid-derived side chains of ascaroside pheromones, which regulates development and behavior. Specifically, shortens indol-3-carbonyl(IC)-ascarosides with 7-carbon (IC-asc-C7) or 9-carbon (IC-asc-C9) side chains and contributes to the shortening of ascarosides with 13-carbon (asc-C13) and 15-carbon (asc-C15) side chains. The protein is Acyl-coenzyme A oxidase acox-3 of Caenorhabditis elegans.